The sequence spans 562 residues: NAD-dependent malic enzyme (562 aa).

Tyr-101 functions as the Proton donor in the catalytic mechanism. Arg-154 is an NAD(+) binding site. Lys-172 functions as the Proton acceptor in the catalytic mechanism. The a divalent metal cation site is built by Glu-243, Asp-244, and Asp-267. NAD(+) contacts are provided by Asp-267 and Asn-415.

The protein belongs to the malic enzymes family. In terms of assembly, homotetramer. Mg(2+) is required as a cofactor. Requires Mn(2+) as cofactor.

The enzyme catalyses (S)-malate + NAD(+) = pyruvate + CO2 + NADH. It catalyses the reaction oxaloacetate + H(+) = pyruvate + CO2. The polypeptide is NAD-dependent malic enzyme (Shewanella oneidensis (strain ATCC 700550 / JCM 31522 / CIP 106686 / LMG 19005 / NCIMB 14063 / MR-1)).